An 89-amino-acid chain; its full sequence is Putative membrane protein insertion efficiency factor (89 aa).

It belongs to the UPF0161 family.

It localises to the cell inner membrane. Its function is as follows. Could be involved in insertion of integral membrane proteins into the membrane. In Petrotoga mobilis (strain DSM 10674 / SJ95), this protein is Putative membrane protein insertion efficiency factor.